A 551-amino-acid polypeptide reads, in one-letter code: Hyaluronan synthase 2 (551 aa).

Residues 1-11 lie on the Cytoplasmic side of the membrane; that stretch reads MHCERFICILR. The chain crosses the membrane as a helical span at residues 12–32; it reads IIGTTLFGVSLLLGISAAYIV. The Extracellular segment spans residues 33-45; the sequence is GYQFIQTDNYYFS. Residues 46 to 66 traverse the membrane as a helical segment; sequence FGLYGAILALHLIIQSLFAFL. Topologically, residues 67–374 are cytoplasmic; it reads EHRKMKRSLE…NSLWFHKHHL (308 aa). The helical transmembrane segment at 375 to 395 threads the bilayer; it reads WMTYEAVITGFFPFFLIATVI. The Extracellular portion of the chain corresponds to 396–402; it reads QLFYRGR. A helical transmembrane segment spans residues 403-423; sequence IWNILLFLLTVQLVGLIKSSF. The Cytoplasmic portion of the chain corresponds to 424–429; the sequence is ASALRG. The helical transmembrane segment at 430–450 threads the bilayer; sequence NIVMVFMSFYSVLYMSSLLPA. Residues 451–470 are Extracellular-facing; the sequence is KMFAIATINKAGWGTSGRKT. The helical transmembrane segment at 471-491 threads the bilayer; that stretch reads IVVNFIGLIPITVWFTILLGG. Topologically, residues 492-509 are cytoplasmic; the sequence is VCYTIWRETKKPFSESEK. Residues 510–530 traverse the membrane as a helical segment; it reads IVLAVGAILYACYWVMLLTMY. Topologically, residues 531–551 are extracellular; sequence VSLVMKCGRRRKEPQHDLVLA.

This sequence belongs to the NodC/HAS family. In terms of assembly, homodimer; dimerization promotes enzymatic activity. Mg(2+) is required as a cofactor.

Its subcellular location is the cell membrane. The protein resides in the endoplasmic reticulum membrane. The protein localises to the vesicle. It localises to the golgi apparatus membrane. It is found in the lysosome. It carries out the reaction [hyaluronan](n) + UDP-N-acetyl-alpha-D-glucosamine = N-acetyl-beta-D-glucosaminyl-(1-&gt;4)-[hyaluronan](n) + UDP + H(+). The catalysed reaction is N-acetyl-beta-D-glucosaminyl-(1-&gt;4)-[hyaluronan](n) + UDP-alpha-D-glucuronate = [hyaluronan](n+1) + UDP + H(+). It participates in glycan biosynthesis; hyaluronan biosynthesis. In terms of biological role, catalyzes the addition of GlcNAc or GlcUA monosaccharides to the nascent hyaluronan polymer. Therefore, it is essential to hyaluronan synthesis a major component of most extracellular matrices that has a structural role in tissues architectures and regulates cell adhesion, migration and differentiation. This is one of three isoenzymes responsible for cellular hyaluronan synthesis and it is particularly responsible for the synthesis of high molecular mass hyaluronan. This is Hyaluronan synthase 2 (has2) from Xenopus laevis (African clawed frog).